Reading from the N-terminus, the 435-residue chain is Hydrogenobyrinate a,c-diamide synthase (435 aa).

Residues 239–422 (RIGVARDASF…IHFYLPSNPQ (184 aa)) form the GATase cobBQ-type domain. The Nucleophile role is filled by C321.

Belongs to the CobB/CbiA family. The cofactor is Mg(2+).

The catalysed reaction is hydrogenobyrinate + 2 L-glutamine + 2 ATP + 2 H2O = hydrogenobyrinate a,c-diamide + 2 L-glutamate + 2 ADP + 2 phosphate + 2 H(+). The protein operates within cofactor biosynthesis; adenosylcobalamin biosynthesis; cob(II)yrinate a,c-diamide from precorrin-2 (aerobic route): step 9/10. Functionally, catalyzes the ATP-dependent amidation of the two carboxylate groups at positions a and c of hydrogenobyrinate, using either L-glutamine or ammonia as the nitrogen source. The polypeptide is Hydrogenobyrinate a,c-diamide synthase (Pseudomonas aeruginosa (strain ATCC 15692 / DSM 22644 / CIP 104116 / JCM 14847 / LMG 12228 / 1C / PRS 101 / PAO1)).